Reading from the N-terminus, the 162-residue chain is Nucleotide-binding protein SGR_2909 (162 aa).

This sequence belongs to the YajQ family.

Nucleotide-binding protein. The sequence is that of Nucleotide-binding protein SGR_2909 from Streptomyces griseus subsp. griseus (strain JCM 4626 / CBS 651.72 / NBRC 13350 / KCC S-0626 / ISP 5235).